We begin with the raw amino-acid sequence, 32 residues long: Defensin-3 (32 aa).

3 disulfide bridges follow: Cys-3/Cys-31, Cys-5/Cys-20, and Cys-10/Cys-30.

It is found in the secreted. Its function is as follows. Has antibacterial activity against the Gram-negative bacterium E.coli and the Gram-positive bacteria L.monocytogenes and S.aureus. Has antifungal activity against C.albicans. This chain is Defensin-3, found in Papio hamadryas (Hamadryas baboon).